A 383-amino-acid polypeptide reads, in one-letter code: 3-ketosteroid-9-alpha-monooxygenase, oxygenase component (383 aa).

A Rieske domain is found at Trp24–Val126. Residues Cys65, His67, Cys84, and His87 each coordinate [2Fe-2S] cluster. The Fe cation site is built by Asn173, His179, His184, and Asp302.

As to quaternary structure, homotrimer. The two-component system 3-ketosteroid-9-alpha-monooxygenase is composed of an oxygenase component KshA and a reductase component KshB. Requires [2Fe-2S] cluster as cofactor. Fe cation serves as cofactor.

The enzyme catalyses androsta-1,4-diene-3,17-dione + 2 reduced [2Fe-2S]-[ferredoxin] + O2 + 2 H(+) = 9alpha-hydroxyandrosta-1,4-diene-3,17-dione + 2 oxidized [2Fe-2S]-[ferredoxin] + H2O. It participates in lipid metabolism; steroid biosynthesis. Involved in the degradation of cholesterol. Catalyzes the introduction of a 9a-hydroxyl moiety into 1,4-androstadiene-3,17-dione (ADD) to yield the 9alpha-hydroxy-1,4-androstadiene-3,17-dione (9OHADD) intermediate which spontaneously form 3-hydroxy-9,10-seconandrost-1,3,5(10)-triene-9,17-dione (HSA) via the meta-cleavage of ring B with concomitant aromatization of ring A. The chain is 3-ketosteroid-9-alpha-monooxygenase, oxygenase component (kshA) from Mycolicibacterium smegmatis (strain ATCC 700084 / mc(2)155) (Mycobacterium smegmatis).